Reading from the N-terminus, the 679-residue chain is UvrABC system protein B (679 aa).

One can recognise a Helicase ATP-binding domain in the interval 25-412; it reads EGVNQGQRYQ…DGHLAEQVIR (388 aa). 38-45 lines the ATP pocket; sequence GATGTGKT. The Beta-hairpin signature appears at 91-114; it reads YYDYYQPEAYVPVSDTYIAKTSSI. The Helicase C-terminal domain occupies 429 to 591; the sequence is QVDDLLAEIR…IVPRPAGKRA (163 aa). Residues 639–674 form the UVR domain; that stretch reads PELIDQLETKMKEAAKNLNFEEAASLRDRIKKFRQK.

It belongs to the UvrB family. As to quaternary structure, forms a heterotetramer with UvrA during the search for lesions. Interacts with UvrC in an incision complex.

The protein localises to the cytoplasm. Functionally, the UvrABC repair system catalyzes the recognition and processing of DNA lesions. A damage recognition complex composed of 2 UvrA and 2 UvrB subunits scans DNA for abnormalities. Upon binding of the UvrA(2)B(2) complex to a putative damaged site, the DNA wraps around one UvrB monomer. DNA wrap is dependent on ATP binding by UvrB and probably causes local melting of the DNA helix, facilitating insertion of UvrB beta-hairpin between the DNA strands. Then UvrB probes one DNA strand for the presence of a lesion. If a lesion is found the UvrA subunits dissociate and the UvrB-DNA preincision complex is formed. This complex is subsequently bound by UvrC and the second UvrB is released. If no lesion is found, the DNA wraps around the other UvrB subunit that will check the other stand for damage. This is UvrABC system protein B from Prochlorococcus marinus (strain MIT 9313).